A 159-amino-acid chain; its full sequence is Eukaryotic translation initiation factor 5A-2 (159 aa).

Residues M1 to P10 are compositionally biased toward basic and acidic residues. Residues M1–P21 are disordered. K52 carries the post-translational modification Hypusine.

The protein belongs to the eIF-5A family. Post-translationally, lys-52 undergoes hypusination, a unique post-translational modification that consists in the addition of a butylamino group from spermidine to lysine side chain, leading to the formation of the unusual amino acid hypusine. eIF-5As are the only known proteins to undergo this modification, which is essential for their function.

Its function is as follows. Translation factor that promotes translation elongation and termination, particularly upon ribosome stalling at specific amino acid sequence contexts. Binds between the exit (E) and peptidyl (P) site of the ribosome and promotes rescue of stalled ribosome: specifically required for efficient translation of polyproline-containing peptides as well as other motifs that stall the ribosome. Acts as a ribosome quality control (RQC) cofactor by joining the RQC complex to facilitate peptidyl transfer during CAT tailing step. The sequence is that of Eukaryotic translation initiation factor 5A-2 from Medicago sativa (Alfalfa).